A 337-amino-acid chain; its full sequence is uncharacterized protein (337 aa).

Over residues 42 to 66 (SHSVSPSPSPSDFSSSSSSSSSSPS) the composition is skewed to low complexity. The interval 42 to 68 (SHSVSPSPSPSDFSSSSSSSSSSPSTF) is disordered. Positions 129–304 (FLVIDLEGKV…DDTKNITRVV (176 aa)) constitute an Exonuclease domain. Mg(2+) is bound by residues Asp-133, Glu-135, and Asp-234. Catalysis depends on Glu-135, which acts as the Proton acceptor. Position 135 (Glu-135) interacts with AMP. The active-site Proton acceptor is His-291. Residue His-291 participates in AMP binding. Mg(2+) is bound at residue Asp-296.

This is an uncharacterized protein from Arabidopsis thaliana (Mouse-ear cress).